The following is a 208-amino-acid chain: CASP-like protein 3A1 (208 aa).

2 stretches are compositionally biased toward polar residues: residues Met-1 to Ser-11 and Thr-17 to Ala-33. The tract at residues Met-1–Ala-33 is disordered. Topologically, residues Met-1–Met-43 are cytoplasmic. Residues Ala-44–Val-64 traverse the membrane as a helical segment. Residues Ser-65–Gln-92 lie on the Extracellular side of the membrane. A helical transmembrane segment spans residues Ser-93–Ala-113. At His-114–Tyr-128 the chain is on the cytoplasmic side. The helical transmembrane segment at Ala-129–Ala-149 threads the bilayer. The Extracellular portion of the chain corresponds to Ala-150–Ser-183. N-linked (GlcNAc...) asparagine glycosylation occurs at Asn-157. Residues Ile-184–Trp-204 traverse the membrane as a helical segment. The Cytoplasmic portion of the chain corresponds to Leu-205–Leu-208.

This sequence belongs to the Casparian strip membrane proteins (CASP) family. Homodimer and heterodimers.

Its subcellular location is the cell membrane. This is CASP-like protein 3A1 from Hordeum vulgare subsp. vulgare (Domesticated barley).